The primary structure comprises 137 residues: Outer membrane protein assembly factor BamE (137 aa).

The signal sequence occupies residues 1–18 (MQVKTLLGATFLALSLAS). Cysteine 19 carries the N-palmitoyl cysteine lipid modification. The S-diacylglycerol cysteine moiety is linked to residue cysteine 19.

The protein belongs to the BamE family. In terms of assembly, part of the Bam complex.

Its subcellular location is the cell outer membrane. In terms of biological role, part of the outer membrane protein assembly complex, which is involved in assembly and insertion of beta-barrel proteins into the outer membrane. This chain is Outer membrane protein assembly factor BamE, found in Haemophilus influenzae (strain ATCC 51907 / DSM 11121 / KW20 / Rd).